The primary structure comprises 353 residues: Green-sensitive opsin-2 (353 aa).

The Extracellular segment spans residues 1–47 (MAAHEPVFAARRHNEDTTRESAFVYTNANNTRDPFEGPNYHIAPRWV). Asparagine 29 carries N-linked (GlcNAc...) asparagine glycosylation. The chain crosses the membrane as a helical span at residues 48 to 72 (YNVSSLWMIFVVIASVFTNGLVIVA). Over 73–84 (TAKFKKLRHPLN) the chain is Cytoplasmic. The chain crosses the membrane as a helical span at residues 85–110 (WILVNLAIADLGETVLASTISVINQI). Residues 111–124 (FGYFILGHPMCVFE) lie on the Extracellular side of the membrane. Residues cysteine 121 and cysteine 198 are joined by a disulfide bond. The chain crosses the membrane as a helical span at residues 125–144 (GWTVSVCGITALWSLTIISW). Over 145 to 163 (ERWVVVCKPFGNVKFDGKW) the chain is Cytoplasmic. Residues 164–187 (AAGGIIFSWVWAIIWCTPPIFGWS) form a helical membrane-spanning segment. The Extracellular segment spans residues 188–213 (RYWPHGLKTSCGPDVFSGSEDPGVAS). A helical membrane pass occupies residues 214–241 (YMITLMLTCCILPLSIIIICYIFVWSAI). The Cytoplasmic portion of the chain corresponds to 242–263 (HQVAQQQKDSESTQKAEKEVSR). A helical transmembrane segment spans residues 264–287 (MVVVMILAFIVCWGPYASFATFSA). The Extracellular portion of the chain corresponds to 288–295 (VNPGYAWH). The helical transmembrane segment at 296–320 (PLAAAMPAYFAKSATIYNPIIYVFM) threads the bilayer. Lysine 307 is subject to N6-(retinylidene)lysine. The Cytoplasmic portion of the chain corresponds to 321–353 (NRQFRSCIMQLFGKKVEDASEVSGSTTEVSTAS).

This sequence belongs to the G-protein coupled receptor 1 family. Opsin subfamily. In terms of tissue distribution, the color pigments are found in the cone photoreceptor cells.

It localises to the membrane. Visual pigments are the light-absorbing molecules that mediate vision. They consist of an apoprotein, opsin, covalently linked to cis-retinal. In Psalidodon fasciatus (Banded astyanax), this protein is Green-sensitive opsin-2 (G101).